Consider the following 341-residue polypeptide: Paired box protein Pax-9 (341 aa).

Positions 4 to 130 form a DNA-binding region, paired; sequence AFGEVNQLGG…SSISRILRNK (127 aa). A PAI subdomain region spans residues 7 to 63; the sequence is EVNQLGGVFVNGRPLPNAIRLRIVELAQLGIRPCDISRQLRVSHGCVSKILARYNET. The interval 82–130 is RED subdomain; that stretch reads TVVKHIRTYKQRDPGIFAWEIRDRLLADGVCDKYNVPSVSSISRILRNK. Residues 168 to 189 are interaction with KDM5B; it reads AAAAKVPTPPGVPAIPGSVAMP.

Interacts with KDM5B.

It localises to the nucleus. Transcription factor required for normal development of thymus, parathyroid glands, ultimobranchial bodies, teeth, skeletal elements of skull and larynx as well as distal limbs. The sequence is that of Paired box protein Pax-9 (PAX9) from Callimico goeldii (Goeldi's marmoset).